The following is a 121-amino-acid chain: Large ribosomal subunit protein uL14c (121 aa).

Belongs to the universal ribosomal protein uL14 family. Part of the 50S ribosomal subunit.

The protein resides in the plastid. The protein localises to the chloroplast. Its function is as follows. Binds to 23S rRNA. This Emiliania huxleyi (Coccolithophore) protein is Large ribosomal subunit protein uL14c.